A 225-amino-acid polypeptide reads, in one-letter code: Probable septum site-determining protein MinC (225 aa).

The protein belongs to the MinC family. Interacts with MinD and FtsZ.

Cell division inhibitor that blocks the formation of polar Z ring septums. Rapidly oscillates between the poles of the cell to destabilize FtsZ filaments that have formed before they mature into polar Z rings. Prevents FtsZ polymerization. This chain is Probable septum site-determining protein MinC, found in Listeria monocytogenes serotype 4a (strain HCC23).